The sequence spans 72 residues: Translation initiation factor IF-1 (72 aa).

Residues methionine 1–lysine 72 enclose the S1-like domain.

The protein belongs to the IF-1 family. In terms of assembly, component of the 30S ribosomal translation pre-initiation complex which assembles on the 30S ribosome in the order IF-2 and IF-3, IF-1 and N-formylmethionyl-tRNA(fMet); mRNA recruitment can occur at any time during PIC assembly.

The protein resides in the cytoplasm. Its function is as follows. One of the essential components for the initiation of protein synthesis. Stabilizes the binding of IF-2 and IF-3 on the 30S subunit to which N-formylmethionyl-tRNA(fMet) subsequently binds. Helps modulate mRNA selection, yielding the 30S pre-initiation complex (PIC). Upon addition of the 50S ribosomal subunit IF-1, IF-2 and IF-3 are released leaving the mature 70S translation initiation complex. In Spiroplasma kunkelii, this protein is Translation initiation factor IF-1.